Reading from the N-terminus, the 87-residue chain is Phosphoribosyl-ATP pyrophosphatase (87 aa).

It belongs to the PRA-PH family.

It is found in the cytoplasm. It catalyses the reaction 1-(5-phospho-beta-D-ribosyl)-ATP + H2O = 1-(5-phospho-beta-D-ribosyl)-5'-AMP + diphosphate + H(+). It functions in the pathway amino-acid biosynthesis; L-histidine biosynthesis; L-histidine from 5-phospho-alpha-D-ribose 1-diphosphate: step 2/9. The chain is Phosphoribosyl-ATP pyrophosphatase from Clavibacter sepedonicus (Clavibacter michiganensis subsp. sepedonicus).